The following is a 430-amino-acid chain: Dihydrolipoyllysine-residue acetyltransferase component of pyruvate dehydrogenase complex (430 aa).

In terms of domain architecture, Lipoyl-binding spans 2 to 77 (AFEFRLPDIG…VVGDVIVKID (76 aa)). Lys-43 carries the N6-lipoyllysine modification. Positions 80–122 (DAEDMQFKGHDDDSSSKEEPAKEEAPAEQAPVATQTEEVDENR) are disordered. The segment covering 84-104 (MQFKGHDDDSSSKEEPAKEEA) has biased composition (basic and acidic residues). A Peripheral subunit-binding (PSBD) domain is found at 125-162 (KAMPSVRKYAREKGVNIKAVSGSGKNGRITKEDVDAYL). Positions 165–200 (GAPTASNESAASATSEEVAETPAAPAAVTLEGDFPE) are disordered. The span at 166–193 (APTASNESAASATSEEVAETPAAPAAVT) shows a compositional bias: low complexity. His-401 is a catalytic residue.

This sequence belongs to the 2-oxoacid dehydrogenase family. Forms a 24-polypeptide structural core with octahedral symmetry. It depends on (R)-lipoate as a cofactor.

The enzyme catalyses N(6)-[(R)-dihydrolipoyl]-L-lysyl-[protein] + acetyl-CoA = N(6)-[(R)-S(8)-acetyldihydrolipoyl]-L-lysyl-[protein] + CoA. Its function is as follows. The pyruvate dehydrogenase complex catalyzes the overall conversion of pyruvate to acetyl-CoA and CO(2). It contains multiple copies of three enzymatic components: pyruvate dehydrogenase (E1), dihydrolipoamide acetyltransferase (E2) and lipoamide dehydrogenase (E3). In Staphylococcus aureus (strain COL), this protein is Dihydrolipoyllysine-residue acetyltransferase component of pyruvate dehydrogenase complex (pdhC).